A 70-amino-acid polypeptide reads, in one-letter code: Putative defensin-like protein 280 (70 aa).

Positions 1–23 are cleaved as a signal peptide; sequence MASIKHFFLVFICVSVLLTSGLA. 3 disulfide bridges follow: Cys30–Cys53, Cys39–Cys65, and Cys43–Cys67.

It belongs to the DEFL family.

Its subcellular location is the secreted. This Arabidopsis thaliana (Mouse-ear cress) protein is Putative defensin-like protein 280.